A 381-amino-acid chain; its full sequence is Homoserine O-succinyltransferase (381 aa).

Positions 45–360 (NAVLVCHALN…PHGHDAFLLD (316 aa)) constitute an AB hydrolase-1 domain. Ser-151 functions as the Nucleophile in the catalytic mechanism. Arg-221 provides a ligand contact to substrate. Active-site residues include Asp-321 and His-354. Position 355 (Asp-355) interacts with substrate.

The protein belongs to the AB hydrolase superfamily. MetX family. In terms of assembly, homodimer.

It is found in the cytoplasm. It carries out the reaction L-homoserine + succinyl-CoA = O-succinyl-L-homoserine + CoA. Its pathway is amino-acid biosynthesis; L-methionine biosynthesis via de novo pathway; O-succinyl-L-homoserine from L-homoserine: step 1/1. In terms of biological role, transfers a succinyl group from succinyl-CoA to L-homoserine, forming succinyl-L-homoserine. The sequence is that of Homoserine O-succinyltransferase from Burkholderia mallei (strain NCTC 10247).